The primary structure comprises 540 residues: Cystathionine gamma-synthase 1, chloroplastic (540 aa).

The N-terminal 78 residues, 1–78 (MAVSSCARAF…RNCSNIGVAQ (78 aa)), are a transit peptide targeting the chloroplast. 7 residues coordinate pyridoxal 5'-phosphate: tyrosine 203, arginine 205, glycine 233, methionine 234, tyrosine 258, serine 353, and threonine 355. N6-(pyridoxal phosphate)lysine is present on lysine 356.

The protein belongs to the trans-sulfuration enzymes family. In terms of assembly, forms homotetramers composed of 2 homodimers. Pyridoxal 5'-phosphate is required as a cofactor.

It is found in the plastid. Its subcellular location is the chloroplast. The enzyme catalyses O-phospho-L-homoserine + L-cysteine = L,L-cystathionine + phosphate. The catalysed reaction is O-succinyl-L-homoserine + L-cysteine = L,L-cystathionine + succinate + H(+). It functions in the pathway amino-acid biosynthesis; L-methionine biosynthesis via de novo pathway; L-cystathionine from O-succinyl-L-homoserine: step 1/1. Its activity is regulated as follows. Irreversibly inactivated by DL-propargylglycine. Functionally, catalyzes the first committed step of methionine (Met) biosynthesis. Catalyzes the formation of L-cystathionine from homoserine esters and L-cysteine, via a gamma-replacement reaction. The chain is Cystathionine gamma-synthase 1, chloroplastic from Nicotiana tabacum (Common tobacco).